The sequence spans 223 residues: MPEGPQALQSPPATIFLLLISAAGLGPGCQALWVEWGPPSVTVSVGEEVRLQCTHNGSNTNVTWWHVLQSNSSWPPVMYRGDVGAGGELIIKPVNKTHRGMYRCQVSDGKKIQRSCGTYLRVRDPLPRPFLDMGEGTKNNIITAEGIILLICAVVPGTLLLFRKRWQNMKFGADIQDDYEDENLYEGLNLDDCSMYEDISRGLQGTYQDVGSLHIGDAQLEKP.

The signal sequence occupies residues M1–A31. The Ig-like C2-type domain maps to L32–L120. At L32–N140 the chain is on the extracellular side. A disulfide bridge connects residues C53 and C104. N-linked (GlcNAc...) asparagine glycans are attached at residues N56, N61, N71, and N95. A helical transmembrane segment spans residues I141–L161. Residues F162–P223 are Cytoplasmic-facing. The ITAM domain occupies D174 to G202. Phosphotyrosine; by SRC-type Tyr-kinases is present on Y185. Position 196 is a phosphotyrosine (Y196). Residue R201 is modified to Asymmetric dimethylarginine; by PRMT1. The residue at position 207 (Y207) is a Phosphotyrosine; by Tyr-kinases.

Heterodimer of alpha and beta chains; disulfide-linked. Part of the B-cell antigen receptor complex where the alpha/beta chain heterodimer is non-covalently associated with an antigen-specific membrane-bound surface immunoglobulin of two heavy chains and two light chains. Interacts through its phosphorylated ITAM domain with the SH2 domains of SYK which stimulates SYK autophosphorylation and activation. Also interacts, when phosphorylated on Tyr-207, with the SH2 domain of BLNK/SLP65, bringing BLNK into proximity with SYK and allowing SYK to phosphorylate BLNK which is necessary for trafficking of the BCR to late endosomes. Interacts with Src-family tyrosine kinases including FYN and LYN, increasing their activity. Post-translationally, phosphorylated on tyrosine, serine and threonine residues upon B-cell activation. Phosphorylation of tyrosine residues by Src-family kinases, including LYN, is an early and essential feature of the BCR signaling cascade. The phosphorylated tyrosines serve as docking sites for SH2-domain containing kinases, leading to their activation which in turn leads to phosphorylation of downstream targets. Phosphorylation of serine and threonine residues may prevent subsequent tyrosine phosphorylation. In terms of processing, arginine methylation in the ITAM domain may interfere with the binding of SYK. It promotes signals leading to B-cell differentiation. B-cells.

It localises to the cell membrane. Functionally, required in cooperation with CD79B for initiation of the signal transduction cascade activated by binding of antigen to the B-cell antigen receptor complex (BCR) which leads to internalization of the complex, trafficking to late endosomes and antigen presentation. Also required for BCR surface expression and for efficient differentiation of pro- and pre-B-cells. Stimulates SYK autophosphorylation and activation. Binds to BLNK, bringing BLNK into proximity with SYK and allowing SYK to phosphorylate BLNK. Also interacts with and increases activity of some Src-family tyrosine kinases. Represses BCR signaling during development of immature B-cells. This chain is B-cell antigen receptor complex-associated protein alpha chain (CD79A), found in Bos taurus (Bovine).